The following is a 411-amino-acid chain: Zinc metalloproteinase/disintegrin (411 aa).

A signal peptide spans 1-20; sequence MIEVLLVTICLAVFPYQGSS. Positions 21 to 190 are excised as a propeptide; it reads IILESGNVND…KASQLYLTPE (170 aa). Positions 197–395 constitute a Peptidase M12B domain; that stretch reads RYVKLAIVVD…SKPQCILNAP (199 aa). D284 is a Ca(2+) binding site. Intrachain disulfides connect C308–C390, C352–C374, and C354–C357. H333 provides a ligand contact to Zn(2+). E334 is a catalytic residue. Zn(2+) is bound by residues H337 and H343. C390 and N393 together coordinate Ca(2+). Positions 396–411 are excised as a propeptide; it reads LRTDTVSTPVSGNEPL.

The protein belongs to the venom metalloproteinase (M12B) family. P-II subfamily. In terms of assembly, monomer. Requires Zn(2+) as cofactor. In terms of tissue distribution, expressed by the venom gland.

It is found in the secreted. Functionally, snake venom metalloproteinase that impairs hemostasis in the envenomed animal. In Protobothrops mucrosquamatus (Taiwan habu), this protein is Zinc metalloproteinase/disintegrin.